The chain runs to 64 residues: Large ribosomal subunit protein bL33 (64 aa).

The protein belongs to the bacterial ribosomal protein bL33 family.

The polypeptide is Large ribosomal subunit protein bL33 (Crocosphaera subtropica (strain ATCC 51142 / BH68) (Cyanothece sp. (strain ATCC 51142))).